A 170-amino-acid polypeptide reads, in one-letter code: Small ribosomal subunit protein uS5 (170 aa).

The region spanning 13–76 (LTEKLIGVNR…DQARRSMVKI (64 aa)) is the S5 DRBM domain.

The protein belongs to the universal ribosomal protein uS5 family. As to quaternary structure, part of the 30S ribosomal subunit. Contacts proteins S4 and S8.

With S4 and S12 plays an important role in translational accuracy. Functionally, located at the back of the 30S subunit body where it stabilizes the conformation of the head with respect to the body. The chain is Small ribosomal subunit protein uS5 from Laribacter hongkongensis (strain HLHK9).